Reading from the N-terminus, the 216-residue chain is Uracil phosphoribosyltransferase (216 aa).

5-phospho-alpha-D-ribose 1-diphosphate is bound by residues arginine 85, arginine 110, and 135-143 (DPMVATGYS). Uracil-binding positions include isoleucine 200 and 205 to 207 (GDA). Aspartate 206 contacts 5-phospho-alpha-D-ribose 1-diphosphate.

It belongs to the UPRTase family. It depends on Mg(2+) as a cofactor.

It catalyses the reaction UMP + diphosphate = 5-phospho-alpha-D-ribose 1-diphosphate + uracil. It participates in pyrimidine metabolism; UMP biosynthesis via salvage pathway; UMP from uracil: step 1/1. With respect to regulation, allosterically activated by GTP. Catalyzes the conversion of uracil and 5-phospho-alpha-D-ribose 1-diphosphate (PRPP) to UMP and diphosphate. The chain is Uracil phosphoribosyltransferase from Burkholderia thailandensis (strain ATCC 700388 / DSM 13276 / CCUG 48851 / CIP 106301 / E264).